The chain runs to 196 residues: Small ribosomal subunit protein uS4c (196 aa).

The tract at residues 17 to 36 is disordered; sequence ALPGLTRKTPKSGSNLKKKF. Residues 89 to 169 enclose the S4 RNA-binding domain; that stretch reads MRLDNILFRL…LPKHLTIDTL (81 aa).

Belongs to the universal ribosomal protein uS4 family. In terms of assembly, part of the 30S ribosomal subunit. Contacts protein S5. The interaction surface between S4 and S5 is involved in control of translational fidelity.

The protein resides in the plastid. It localises to the chloroplast. Its function is as follows. One of the primary rRNA binding proteins, it binds directly to 16S rRNA where it nucleates assembly of the body of the 30S subunit. In terms of biological role, with S5 and S12 plays an important role in translational accuracy. The sequence is that of Small ribosomal subunit protein uS4c (rps4) from Festuca gigantea (Giant fescue).